Here is a 252-residue protein sequence, read N- to C-terminus: Ribosomal RNA small subunit methyltransferase J (252 aa).

Residues 101-102 (RD), 117-118 (ER), 153-154 (SS), and Asp-171 contribute to the S-adenosyl-L-methionine site.

This sequence belongs to the methyltransferase superfamily. RsmJ family.

It is found in the cytoplasm. The catalysed reaction is guanosine(1516) in 16S rRNA + S-adenosyl-L-methionine = N(2)-methylguanosine(1516) in 16S rRNA + S-adenosyl-L-homocysteine + H(+). Its function is as follows. Specifically methylates the guanosine in position 1516 of 16S rRNA. The sequence is that of Ribosomal RNA small subunit methyltransferase J from Salmonella typhimurium (strain LT2 / SGSC1412 / ATCC 700720).